A 291-amino-acid chain; its full sequence is MFIIELIKGIILGVVEGLTEFAPVSSTGHMILVDDMWLKSSEFLGSQSAFTFKIVIQLGSVFAAAWVFRERFLEILHIGKHKHVEGDNDQQRRSKPRRLNLLHVLVGMVPAGILGLLFDDFIEEHLFSVPTVMIGLFVGAIYMIIADKYSAKVKNPQTVDQISYFQAFVIGISQAVAMWPGFSRSGSTISTGVLMKLNHKAASDFTFIMAVPIMLAASGLSLLKHYQDIQIADIPFYILGFLAAFTVGLIAIKTFLHQINKIKLIPFAIYRIVLVIFIAILYFGFGIGKGI.

Transmembrane regions (helical) follow at residues 1–21, 48–68, 102–122, 126–146, 162–182, 203–223, 231–251, and 267–287; these read MFII…LTEF, SAFT…AWVF, LHVL…DDFI, LFSV…MIIA, ISYF…WPGF, SDFT…LSLL, IADI…GLIA, and FAIY…GFGI.

It belongs to the UppP family.

It is found in the cell membrane. The enzyme catalyses di-trans,octa-cis-undecaprenyl diphosphate + H2O = di-trans,octa-cis-undecaprenyl phosphate + phosphate + H(+). Catalyzes the dephosphorylation of undecaprenyl diphosphate (UPP). Confers resistance to bacitracin. In Staphylococcus aureus (strain COL), this protein is Undecaprenyl-diphosphatase.